The primary structure comprises 687 residues: Tripartite terminase subunit 3 (687 aa).

Residues 67–91 (HHPATPTSANPDVGTPRPSEDNVPA) are disordered. Residues 221–228 (IPRRHGKT) carry the Walker A motif motif. Residues 316–321 (LLYVDE) carry the Walker B motif motif. The active-site For ATPase activity is the E321. Active-site for nuclease activity residues include D476, E550, and D662.

It belongs to the herpesviridae TRM3 protein family. Interacts with the terminase subunits TRM1 and TRM2. Interacts with portal protein.

The protein resides in the host nucleus. Functionally, component of the molecular motor that translocates viral genomic DNA in empty capsid during DNA packaging. Forms a tripartite terminase complex together with TRM1 and TRM2 in the host cytoplasm. Once the complex reaches the host nucleus, it interacts with the capsid portal vertex. This portal forms a ring in which genomic DNA is translocated into the capsid. TRM3 carries an RNase H-like nuclease activity that plays an important role for the cleavage of concatemeric viral DNA into unit length genomes. In Human herpesvirus 8 type P (isolate GK18) (HHV-8), this protein is Tripartite terminase subunit 3.